Reading from the N-terminus, the 707-residue chain is MNYSLFISCSKGLEYLLEDELKGLGLHVTQVSPQGVYGEASLPVIYNLCLWSRLANRIQLILFSGHAAKEQAVHQLCTDFHWQTVFTHDKTIAIEFHGASEQIRNTMFGAQIVKDGIVDHFRRLNGSRPSVDKEKPQILIHAHLKNDILTVSFDLVGYSLHQRGYRKKAGKAPLKENVAAAMLLRAKWPELAAQGYGLHDPFCGSGTLVIEAAMMAAHIAPGLLRQDQSLQYWARHQSSLWEKLRTQALQQVKPLAVKLVGTDADGKIITLARSNAERAGVLPLVEFNTLPLNACRPGTKRGLVVCNPPYGERLGEVTQLVPLYQQLGTTLHTCYQGWQAAILTSSPVLAKALGLRADKQYTLYNGPLECKLYCLTLSAANKLKNTPDAPLSDNAQMLFNRLEKNRNHLQKWARKNQITCYRIYDADLPEYAYAIDIYNDYAVLQEYAPPASIPVHKAEKRSLEMLQVVPRALGIHPEKLIVKQRKQQKGSEQYQKIGKTSQRLIVTEGKAKLIVNLYDYLDTGLFLDHRLMRLKFAQLEPGTRFLNCFCYTASASVHAALAGALTTNVDLSKTYLLWAEDNFRLNDINLSKHQFLQYDCKEWMKTTRDKFDVIFLDPPSFSNSKRMSDILDIQRDHVSLINMAMRLLNPDGVLYFSTNLRQFKLEPMLKEKYAVQDITPQTIDQDFKRNSKIHHCFKIVMPHFADN.

Residues 44 to 155 (VIYNLCLWSR…NDILTVSFDL (112 aa)) enclose the THUMP domain.

Belongs to the methyltransferase superfamily. RlmKL family.

Its subcellular location is the cytoplasm. It catalyses the reaction guanosine(2445) in 23S rRNA + S-adenosyl-L-methionine = N(2)-methylguanosine(2445) in 23S rRNA + S-adenosyl-L-homocysteine + H(+). The enzyme catalyses guanosine(2069) in 23S rRNA + S-adenosyl-L-methionine = N(2)-methylguanosine(2069) in 23S rRNA + S-adenosyl-L-homocysteine + H(+). Its function is as follows. Specifically methylates the guanine in position 2445 (m2G2445) and the guanine in position 2069 (m7G2069) of 23S rRNA. The chain is Ribosomal RNA large subunit methyltransferase K/L from Legionella pneumophila (strain Paris).